A 133-amino-acid polypeptide reads, in one-letter code: Small ribosomal subunit protein uS19 (133 aa).

It belongs to the universal ribosomal protein uS19 family. In terms of assembly, part of the 30S ribosomal subunit.

Functionally, protein S19 forms a complex with S13 that binds strongly to the 16S ribosomal RNA. The sequence is that of Small ribosomal subunit protein uS19 from Thermococcus kodakarensis (strain ATCC BAA-918 / JCM 12380 / KOD1) (Pyrococcus kodakaraensis (strain KOD1)).